Consider the following 403-residue polypeptide: Argininosuccinate synthase (403 aa).

10-18 (AYSGGLDTS) provides a ligand contact to ATP. Y87 is an L-citrulline binding site. Residue G117 participates in ATP binding. L-aspartate-binding residues include T119, N123, and D124. N123 is a binding site for L-citrulline. L-citrulline contacts are provided by R127, S175, E260, and Y272.

The protein belongs to the argininosuccinate synthase family. Type 1 subfamily. Homotetramer.

The protein localises to the cytoplasm. The enzyme catalyses L-citrulline + L-aspartate + ATP = 2-(N(omega)-L-arginino)succinate + AMP + diphosphate + H(+). It participates in amino-acid biosynthesis; L-arginine biosynthesis; L-arginine from L-ornithine and carbamoyl phosphate: step 2/3. This is Argininosuccinate synthase from Bacillus subtilis (strain 168).